The primary structure comprises 370 residues: Dual-specificity RNA methyltransferase RlmN (370 aa).

The active-site Proton acceptor is the glutamate 97. Positions 103 to 340 constitute a Radical SAM core domain; sequence EKSRGTLCIS…CTVRRTRGDD (238 aa). Cysteine 110 and cysteine 345 form a disulfide bridge. [4Fe-4S] cluster contacts are provided by cysteine 117, cysteine 121, and cysteine 124. S-adenosyl-L-methionine-binding positions include 170-171, serine 202, 224-226, and asparagine 302; these read GE and SLH. The S-methylcysteine intermediate role is filled by cysteine 345.

Belongs to the radical SAM superfamily. RlmN family. [4Fe-4S] cluster serves as cofactor.

The protein localises to the cytoplasm. It catalyses the reaction adenosine(2503) in 23S rRNA + 2 reduced [2Fe-2S]-[ferredoxin] + 2 S-adenosyl-L-methionine = 2-methyladenosine(2503) in 23S rRNA + 5'-deoxyadenosine + L-methionine + 2 oxidized [2Fe-2S]-[ferredoxin] + S-adenosyl-L-homocysteine. The enzyme catalyses adenosine(37) in tRNA + 2 reduced [2Fe-2S]-[ferredoxin] + 2 S-adenosyl-L-methionine = 2-methyladenosine(37) in tRNA + 5'-deoxyadenosine + L-methionine + 2 oxidized [2Fe-2S]-[ferredoxin] + S-adenosyl-L-homocysteine. Specifically methylates position 2 of adenine 2503 in 23S rRNA and position 2 of adenine 37 in tRNAs. m2A2503 modification seems to play a crucial role in the proofreading step occurring at the peptidyl transferase center and thus would serve to optimize ribosomal fidelity. The chain is Dual-specificity RNA methyltransferase RlmN from Hydrogenovibrio crunogenus (strain DSM 25203 / XCL-2) (Thiomicrospira crunogena).